We begin with the raw amino-acid sequence, 429 residues long: Aspartate--tRNA(Asp/Asn) ligase (429 aa).

Position 167 (glutamate 167) interacts with L-aspartate. The interval 189–192 (QLYK) is aspartate. Position 210 (arginine 210) interacts with L-aspartate. Residues 210 to 212 (RAE) and glutamate 352 contribute to the ATP site. Mg(2+) is bound by residues glutamate 352 and serine 355. L-aspartate contacts are provided by serine 355 and arginine 359. 400–403 (GLAR) is an ATP binding site.

The protein belongs to the class-II aminoacyl-tRNA synthetase family. Type 2 subfamily. As to quaternary structure, homodimer. The cofactor is Mg(2+).

The protein resides in the cytoplasm. The catalysed reaction is tRNA(Asx) + L-aspartate + ATP = L-aspartyl-tRNA(Asx) + AMP + diphosphate. In terms of biological role, aspartyl-tRNA synthetase with relaxed tRNA specificity since it is able to aspartylate not only its cognate tRNA(Asp) but also tRNA(Asn). Reaction proceeds in two steps: L-aspartate is first activated by ATP to form Asp-AMP and then transferred to the acceptor end of tRNA(Asp/Asn). The sequence is that of Aspartate--tRNA(Asp/Asn) ligase from Saccharolobus solfataricus (strain ATCC 35092 / DSM 1617 / JCM 11322 / P2) (Sulfolobus solfataricus).